A 174-amino-acid polypeptide reads, in one-letter code: Repair DNA polymerase X (174 aa).

The involved in ssDNA binding stretch occupies residues 42–51 (REEKMLNDVD). Mg(2+)-binding residues include aspartate 49 and aspartate 51. The cysteines at positions 81 and 86 are disulfide-linked. Aspartate 100 lines the Mg(2+) pocket.

It belongs to the DNA polymerase type-X family. Mg(2+) serves as cofactor.

The protein localises to the virion. It carries out the reaction DNA(n) + a 2'-deoxyribonucleoside 5'-triphosphate = DNA(n+1) + diphosphate. In terms of biological role, error-prone polymerase lacking a proofreading 3'-5' exonuclease which catalyzes the gap-filling reaction during the DNA repair process. Specifically binds intermediates in the single-nucleotide base-excision repair process. Also catalyzes DNA polymerization with low nucleotide-insertion fidelity. Probably acts as a strategic DNA mutase, which gives rise to a rapid emergence of variants. Generates mismatched G-G pairs, in that case, the polymerase first binds the deoxynucleotide followed by mismatch formation. Together with the viral DNA ligase, fills the single nucleotide gaps generated by the AP endonuclease. Binds DNA with high affinity via the helix alphaE. The chain is Repair DNA polymerase X from Ornithodoros (relapsing fever ticks).